A 500-amino-acid polypeptide reads, in one-letter code: Galactofuranose transporter ATP-binding protein YtfR (500 aa).

2 consecutive ABC transporter domains span residues 10–245 and 259–497; these read LRTE…LGRE and LSDK…IMNA. 42 to 49 provides a ligand contact to ATP; it reads GENGAGKS.

This sequence belongs to the ABC transporter superfamily. In terms of assembly, the complex is composed of two ATP-binding proteins (YtfR), two transmembrane proteins (YtfT and YjfF) and a solute-binding protein (YtfQ).

The protein localises to the cell inner membrane. The enzyme catalyses D-galactofuranose(out) + ATP + H2O = D-galactofuranose(in) + ADP + phosphate + H(+). Its function is as follows. Part of the ABC transporter complex YtfQRT-YjfF involved in galactofuranose transport. Responsible for energy coupling to the transport system. This is Galactofuranose transporter ATP-binding protein YtfR (ytfR) from Escherichia coli (strain K12).